The following is a 407-amino-acid chain: UDP-N-acetylglucosamine--N-acetylmuramyl-(pentapeptide) pyrophosphoryl-undecaprenol N-acetylglucosamine transferase (407 aa).

The segment at M1–A21 is disordered. UDP-N-acetyl-alpha-D-glucosamine-binding positions include T38 to G40, N157, S228, and Q324.

It belongs to the glycosyltransferase 28 family. MurG subfamily.

It localises to the cell membrane. It catalyses the reaction di-trans,octa-cis-undecaprenyl diphospho-N-acetyl-alpha-D-muramoyl-L-alanyl-D-glutamyl-meso-2,6-diaminopimeloyl-D-alanyl-D-alanine + UDP-N-acetyl-alpha-D-glucosamine = di-trans,octa-cis-undecaprenyl diphospho-[N-acetyl-alpha-D-glucosaminyl-(1-&gt;4)]-N-acetyl-alpha-D-muramoyl-L-alanyl-D-glutamyl-meso-2,6-diaminopimeloyl-D-alanyl-D-alanine + UDP + H(+). The protein operates within cell wall biogenesis; peptidoglycan biosynthesis. Its function is as follows. Cell wall formation. Catalyzes the transfer of a GlcNAc subunit on undecaprenyl-pyrophosphoryl-MurNAc-pentapeptide (lipid intermediate I) to form undecaprenyl-pyrophosphoryl-MurNAc-(pentapeptide)GlcNAc (lipid intermediate II). The polypeptide is UDP-N-acetylglucosamine--N-acetylmuramyl-(pentapeptide) pyrophosphoryl-undecaprenol N-acetylglucosamine transferase (Mycobacterium leprae (strain TN)).